A 1256-amino-acid polypeptide reads, in one-letter code: Muramidase-released protein (1256 aa).

The first 47 residues, 1-47, serve as a signal peptide directing secretion; the sequence is MRRSNKKSFDWYGTKQQFSIRKYHFGAASVLLGVSLVLGAGAQVVKA. Small repeat units lie at residues 663–681 and 839–861; these read KTTG…VYEK and KTDG…VYQK. Disordered stretches follow at residues 873–949, 967–994, and 1028–1049; these read PETD…VDTP, GNPI…KTVT, and KEPV…TDNK. The stretch at 953–1006 is one Large repeat; sequence VPVKKVVTNHVDEEGNPIAPQEEGTKPNKSIPGYEFTGKTVTDEDGNTTHIYKK. A compositionally biased stretch (polar residues) spans 1033 to 1045; that stretch reads DTPTSPEGTPYDT. The Small repeat unit spans residues 1064–1084; it reads RVDGTENGKVVEGETVVTYVY. Large repeat units lie at residues 1089-1142 and 1143-1195; these read TPAK…IYKK and TPAK…IYRK. The segment at 1102-1137 is disordered; sequence EGNPVAPQEEGTKPNKSIPGYEFTGKTVTDEDGNTT. Residues 1196–1229 are disordered; it reads LSNKPTTPEKETPAKPQAGKTASGKAQLPNTGEA. The LPXTG sorting signal motif lies at 1223–1227; the sequence is LPNTG. Thr1226 is subject to Pentaglycyl murein peptidoglycan amidated threonine. Residues 1227-1256 constitute a propeptide, removed by sortase; sequence GEASSVAGALGTAMLVATLAFARKRRRNED.

Its subcellular location is the secreted. It is found in the cell wall. This is Muramidase-released protein (mrp) from Streptococcus suis.